A 107-amino-acid chain; its full sequence is Putative ATP synthase subunit f, mitochondrial (107 aa).

This sequence belongs to the ATPase F chain family. F-type ATPases have 2 components, CF(1) - the catalytic core - and CF(0) - the membrane proton channel. CF(0) seems to have nine subunits: a, b, c, d, e, f, g, F6 and 8 (or A6L).

The protein resides in the mitochondrion membrane. Functionally, mitochondrial membrane ATP synthase (F(1)F(0) ATP synthase or Complex V) produces ATP from ADP in the presence of a proton gradient across the membrane which is generated by electron transport complexes of the respiratory chain. F-type ATPases consist of two structural domains, F(1) - containing the extramembraneous catalytic core and F(0) - containing the membrane proton channel, linked together by a central stalk and a peripheral stalk. During catalysis, ATP synthesis in the catalytic domain of F(1) is coupled via a rotary mechanism of the central stalk subunits to proton translocation. Part of the complex F(0) domain. Minor subunit located with subunit a in the membrane. The chain is Putative ATP synthase subunit f, mitochondrial from Drosophila melanogaster (Fruit fly).